A 177-amino-acid polypeptide reads, in one-letter code: Large ribosomal subunit protein uL6 (177 aa).

The tract at residues 151 to 177 is disordered; it reads YRPPEPYKGKGIRYSDEHVVRKEAKKK. Residues 155 to 177 are compositionally biased toward basic and acidic residues; the sequence is EPYKGKGIRYSDEHVVRKEAKKK.

It belongs to the universal ribosomal protein uL6 family. As to quaternary structure, part of the 50S ribosomal subunit.

Functionally, this protein binds to the 23S rRNA, and is important in its secondary structure. It is located near the subunit interface in the base of the L7/L12 stalk, and near the tRNA binding site of the peptidyltransferase center. In Psychrobacter sp. (strain PRwf-1), this protein is Large ribosomal subunit protein uL6.